The following is a 292-amino-acid chain: Small ribosomal subunit biogenesis GTPase RsgA (292 aa).

The region spanning 64–221 (RSELFRPAVA…LVDTPGFSSL (158 aa)) is the CP-type G domain. GTP contacts are provided by residues 113-116 (NKMD) and 164-172 (GPSGVGKST). Positions 245, 250, 252, and 258 each coordinate Zn(2+).

This sequence belongs to the TRAFAC class YlqF/YawG GTPase family. RsgA subfamily. In terms of assembly, monomer. Associates with 30S ribosomal subunit, binds 16S rRNA. Zn(2+) is required as a cofactor.

It localises to the cytoplasm. Functionally, one of several proteins that assist in the late maturation steps of the functional core of the 30S ribosomal subunit. Helps release RbfA from mature subunits. May play a role in the assembly of ribosomal proteins into the subunit. Circularly permuted GTPase that catalyzes slow GTP hydrolysis, GTPase activity is stimulated by the 30S ribosomal subunit. This Clostridium botulinum (strain ATCC 19397 / Type A) protein is Small ribosomal subunit biogenesis GTPase RsgA.